The following is a 360-amino-acid chain: Peptide chain release factor 1 (360 aa).

Gln235 bears the N5-methylglutamine mark. Over residues 284–293 (ARRQQEESST) the composition is skewed to basic and acidic residues. The segment at 284–314 (ARRQQEESSTRRNLLGSGDRSDRNRTYNFPQ) is disordered.

Belongs to the prokaryotic/mitochondrial release factor family. In terms of processing, methylated by PrmC. Methylation increases the termination efficiency of RF1.

The protein resides in the cytoplasm. In terms of biological role, peptide chain release factor 1 directs the termination of translation in response to the peptide chain termination codons UAG and UAA. The chain is Peptide chain release factor 1 from Erwinia tasmaniensis (strain DSM 17950 / CFBP 7177 / CIP 109463 / NCPPB 4357 / Et1/99).